Consider the following 557-residue polypeptide: Copine-7 (557 aa).

C2 domains are found at residues 1-128 and 135-263; these read MSGD…TRPL and NAGK…AQWD. Ca(2+) is bound by residues D168, D174, D230, D232, and D238. Residues 306 to 505 form the VWFA domain; the sequence is HCTVAIDFTA…PALRDIVQFV (200 aa).

The protein belongs to the copine family. Ca(2+) is required as a cofactor.

Its subcellular location is the cytoplasm. It is found in the nucleus. It localises to the cell membrane. Calcium-dependent phospholipid-binding protein that may play a role in calcium-mediated intracellular processes. The protein is Copine-7 of Mus musculus (Mouse).